Reading from the N-terminus, the 333-residue chain is Ornithine carbamoyltransferase (333 aa).

Carbamoyl phosphate-binding positions include 56–59 (STRT), Gln83, Arg107, and 134–137 (HPTQ). L-ornithine contacts are provided by residues Asn167, Asp231, and 235-236 (SM). Carbamoyl phosphate contacts are provided by residues 273-274 (CL) and Arg318.

The protein belongs to the aspartate/ornithine carbamoyltransferase superfamily. OTCase family.

It is found in the cytoplasm. The catalysed reaction is carbamoyl phosphate + L-ornithine = L-citrulline + phosphate + H(+). It participates in amino-acid biosynthesis; L-arginine biosynthesis; L-arginine from L-ornithine and carbamoyl phosphate: step 1/3. In terms of biological role, has vitronectin and fibronectin-binding activity. Reversibly catalyzes the transfer of the carbamoyl group from carbamoyl phosphate (CP) to the N(epsilon) atom of ornithine (ORN) to produce L-citrulline. The sequence is that of Ornithine carbamoyltransferase (argF) from Staphylococcus epidermidis (strain ATCC 12228 / FDA PCI 1200).